An 89-amino-acid polypeptide reads, in one-letter code: Large ribosomal subunit protein bL31B (89 aa).

This sequence belongs to the bacterial ribosomal protein bL31 family. Type B subfamily. As to quaternary structure, part of the 50S ribosomal subunit.

The sequence is that of Large ribosomal subunit protein bL31B from Corynebacterium urealyticum (strain ATCC 43042 / DSM 7109).